The primary structure comprises 312 residues: Plasminogen activator (312 aa).

Residues 1 to 20 (MKKSSIVATIITILSGSANA) form the signal peptide. Over 21–31 (ASSQLIPNISP) the chain is Periplasmic. Residues 32–40 (DSFTVAAST) traverse the membrane as a beta stranded segment. Topologically, residues 41–70 (GMLSGKSHEMLYDAETGRKISQLDWKIKNV) are extracellular. Residues 71 to 80 (AILKGDISWD) form a beta stranded membrane-spanning segment. The Periplasmic portion of the chain corresponds to 81–84 (PYSF). A beta stranded transmembrane segment spans residues 85–94 (LTLNARGWTS). At 95 to 131 (LASGSGNMDDYDWMNENQSEWTDHSSHPATNVNHANE) the chain is on the extracellular side. Catalysis depends on residues aspartate 104 and aspartate 106. The beta stranded transmembrane segment at 132-140 (YDLNVKGWL) threads the bilayer. Residues 141–145 (LQDEN) are Periplasmic-facing. Residues 146–154 (YKAGITAGY) traverse the membrane as a beta stranded segment. Topologically, residues 155 to 194 (QETRFSWTATGGSYSYNNGAYTGNFPKGVRVIGYNQRFSM) are extracellular. Residues 195–204 (PYIGLAGQYR) form a beta stranded membrane-spanning segment. The Periplasmic segment spans residues 205 to 207 (IND). The chain crosses the membrane as a beta stranded span at residues 208-216 (FELNALFKF). Residues 217-244 (SDWVRAHDNDEHYMRDLTFREKTSGSRY) are Extracellular-facing. Residues aspartate 226 and histidine 228 contribute to the active site. The chain crosses the membrane as a beta stranded span at residues 245-255 (YGTVINAGYYV). Residues 256–258 (TPN) lie on the Periplasmic side of the membrane. Residues 259–267 (AKVFAEFTY) form a beta stranded membrane-spanning segment. The Extracellular segment spans residues 268-301 (SKYDEGKGGTQTIDKNSGDSVSIGGDAAGISNKN). A beta stranded transmembrane segment spans residues 302–312 (YTVTAGLQYRF).

The protein belongs to the peptidase A26 family.

The protein localises to the cell outer membrane. The catalysed reaction is Converts human Glu-plasminogen to plasmin by cleaving the 560-Arg-|-Val-561 peptide bond that is also hydrolyzed by the mammalian u-plasminogen activator and t-plasminogen activator. Also cleaves arginyl bonds in other proteins.. Requires bacterial lipopolysaccharide (LPS) for activation; addition of LPS to inactive protein reactivates it. In the absence of LPS the active site groove is slightly narrower, and peptide substrate binds deep within the active site groove, displacing the nucleophilic water molecule. In terms of biological role, in the mammalian host activates (cleaves) plasminogen to generate the serine protease plasmin. Plasmin degrades fibrin clots (fibrinolysis) and facilitates bacterial cell migration, enabling rapid dissemination of bacteria from the initial site of infection. Cleaves host plasminogen to generate plasmin and probably also has autocatalytic activity. Fibrinolytic activity prevails at 37 degrees Celsius whereas coagulase expression predominates at lower temperatures (28 degrees Celsius). Cleaves plasminogen; plasminogen cleavage is much higher than coagulase activity. In Yersinia pestis, this protein is Plasminogen activator.